Consider the following 206-residue polypeptide: Holliday junction branch migration complex subunit RuvA (206 aa).

A domain I region spans residues 1 to 64; it reads MIGRLTGNLV…ETSQQLFGFI (64 aa). The interval 65–142 is domain II; that stretch reads DQQDREFFRM…SWQVTPSVDA (78 aa). Residues 143 to 154 are flexible linker; that stretch reads TGSLVALDSAAP. The tract at residues 155–206 is domain III; sequence SQNAIVAEAESALVALGYKPVEASKAVARVTSDEITRSEDLIRLALRNMIPA.

Belongs to the RuvA family. Homotetramer. Forms an RuvA(8)-RuvB(12)-Holliday junction (HJ) complex. HJ DNA is sandwiched between 2 RuvA tetramers; dsDNA enters through RuvA and exits via RuvB. An RuvB hexamer assembles on each DNA strand where it exits the tetramer. Each RuvB hexamer is contacted by two RuvA subunits (via domain III) on 2 adjacent RuvB subunits; this complex drives branch migration. In the full resolvosome a probable DNA-RuvA(4)-RuvB(12)-RuvC(2) complex forms which resolves the HJ.

It is found in the cytoplasm. In terms of biological role, the RuvA-RuvB-RuvC complex processes Holliday junction (HJ) DNA during genetic recombination and DNA repair, while the RuvA-RuvB complex plays an important role in the rescue of blocked DNA replication forks via replication fork reversal (RFR). RuvA specifically binds to HJ cruciform DNA, conferring on it an open structure. The RuvB hexamer acts as an ATP-dependent pump, pulling dsDNA into and through the RuvAB complex. HJ branch migration allows RuvC to scan DNA until it finds its consensus sequence, where it cleaves and resolves the cruciform DNA. The polypeptide is Holliday junction branch migration complex subunit RuvA (Teredinibacter turnerae (strain ATCC 39867 / T7901)).